A 120-amino-acid polypeptide reads, in one-letter code: Cu-Zn superoxide dismutase-like protein OPG175 (120 aa).

Cysteines 52 and 102 form a disulfide.

It belongs to the Cu-Zn superoxide dismutase family.

It is found in the virion. The protein localises to the host cytoplasm. Superoxide dismutase-like protein with no enzymatic activity. This chain is Cu-Zn superoxide dismutase-like protein OPG175 (OPG175), found in Vaccinia virus (strain Tashkent) (VACV).